Consider the following 107-residue polypeptide: Large ribosomal subunit protein bL21c (107 aa).

It belongs to the bacterial ribosomal protein bL21 family. As to quaternary structure, part of the 50S ribosomal subunit.

Its subcellular location is the plastid. The protein resides in the chloroplast. In terms of biological role, this protein binds to 23S rRNA. The sequence is that of Large ribosomal subunit protein bL21c from Cyanidioschyzon merolae (strain NIES-3377 / 10D) (Unicellular red alga).